A 327-amino-acid chain; its full sequence is Tartrate-resistant acid phosphatase type 5 (327 aa).

Residues 1-22 (MDTWMVLLGLQILLLPLLAHCT) form the signal peptide. Asp35, Asp73, Tyr76, and Asn112 together coordinate Fe cation. N-linked (GlcNAc...) asparagine glycans are attached at residues Asn118 and Asn149. A disulfide bond links Cys163 and Cys221. His207, His242, and His244 together coordinate Fe cation.

As to quaternary structure, exists either as monomer or, after proteolytic processing, as a dimer of two chains linked by disulfide bond(s). It depends on Fe cation as a cofactor. Characteristic constituent of osteoclasts and some mononuclear preosteoclasts. Preferentially expressed in skeletal tissues.

It localises to the lysosome. It carries out the reaction a phosphate monoester + H2O = an alcohol + phosphate. Functionally, may play a role in the process of bone resorption. The osteoclastic trap acts on nucleotide tri- and diphosphates with higher affinity, compared with other substrates. The sequence is that of Tartrate-resistant acid phosphatase type 5 (Acp5) from Rattus norvegicus (Rat).